Reading from the N-terminus, the 347-residue chain is UDP-3-O-acylglucosamine N-acyltransferase 1 (347 aa).

The Proton acceptor role is filled by histidine 246.

This sequence belongs to the transferase hexapeptide repeat family. LpxD subfamily. Homotrimer.

The catalysed reaction is a UDP-3-O-[(3R)-3-hydroxyacyl]-alpha-D-glucosamine + a (3R)-hydroxyacyl-[ACP] = a UDP-2-N,3-O-bis[(3R)-3-hydroxyacyl]-alpha-D-glucosamine + holo-[ACP] + H(+). Its pathway is bacterial outer membrane biogenesis; LPS lipid A biosynthesis. In terms of biological role, catalyzes the N-acylation of UDP-3-O-acylglucosamine using 3-hydroxyacyl-ACP as the acyl donor. Is involved in the biosynthesis of lipid A, a phosphorylated glycolipid that anchors the lipopolysaccharide to the outer membrane of the cell. The protein is UDP-3-O-acylglucosamine N-acyltransferase 1 of Francisella tularensis subsp. holarctica (strain LVS).